The chain runs to 391 residues: Aspartic protease 17 (391 aa).

A signal peptide spans 1-15 (MHLIFLLFLAPFCSA). Residues 65–385 (YLGNFTVGTP…DIGNARIGFA (321 aa)) enclose the Peptidase A1 domain. The N-linked (GlcNAc...) asparagine glycan is linked to Asn68. Asp83 is an active-site residue. N-linked (GlcNAc...) asparagine glycosylation is present at Asn108. Asp274 is a catalytic residue. An intrachain disulfide couples Cys309 to Cys345.

Belongs to the peptidase A1 family. As to expression, expressed in intestinal cells.

It localises to the secreted. In terms of biological role, aspartic proteinase. The protein is Aspartic protease 17 of Caenorhabditis elegans.